A 223-amino-acid chain; its full sequence is Probable chemoreceptor glutamine deamidase CheD (223 aa).

The disordered stretch occupies residues 189 to 223; the sequence is QTASAKAHTPPQIERFSAPAKPRFERFTRPSTATS.

The protein belongs to the CheD family.

The catalysed reaction is L-glutaminyl-[protein] + H2O = L-glutamyl-[protein] + NH4(+). In terms of biological role, probably deamidates glutamine residues to glutamate on methyl-accepting chemotaxis receptors (MCPs), playing an important role in chemotaxis. This chain is Probable chemoreceptor glutamine deamidase CheD, found in Bordetella petrii (strain ATCC BAA-461 / DSM 12804 / CCUG 43448).